A 319-amino-acid chain; its full sequence is Acetyl-coenzyme A carboxylase carboxyl transferase subunit alpha (319 aa).

One can recognise a CoA carboxyltransferase C-terminal domain in the interval 35–296 (NIDEEVHRLR…KAQLLEDLAD (262 aa)).

The protein belongs to the AccA family. Acetyl-CoA carboxylase is a heterohexamer composed of biotin carboxyl carrier protein (AccB), biotin carboxylase (AccC) and two subunits each of ACCase subunit alpha (AccA) and ACCase subunit beta (AccD).

The protein localises to the cytoplasm. It catalyses the reaction N(6)-carboxybiotinyl-L-lysyl-[protein] + acetyl-CoA = N(6)-biotinyl-L-lysyl-[protein] + malonyl-CoA. It functions in the pathway lipid metabolism; malonyl-CoA biosynthesis; malonyl-CoA from acetyl-CoA: step 1/1. Its function is as follows. Component of the acetyl coenzyme A carboxylase (ACC) complex. First, biotin carboxylase catalyzes the carboxylation of biotin on its carrier protein (BCCP) and then the CO(2) group is transferred by the carboxyltransferase to acetyl-CoA to form malonyl-CoA. The protein is Acetyl-coenzyme A carboxylase carboxyl transferase subunit alpha of Salmonella dublin (strain CT_02021853).